A 360-amino-acid chain; its full sequence is Peptide chain release factor 1 (360 aa).

At Q235 the chain carries N5-methylglutamine. The tract at residues 284–313 (AKRQQAEASTRRNLLGSGDRSDRNRTYNFP) is disordered.

This sequence belongs to the prokaryotic/mitochondrial release factor family. In terms of processing, methylated by PrmC. Methylation increases the termination efficiency of RF1.

Its subcellular location is the cytoplasm. In terms of biological role, peptide chain release factor 1 directs the termination of translation in response to the peptide chain termination codons UAG and UAA. The protein is Peptide chain release factor 1 of Salmonella schwarzengrund (strain CVM19633).